A 354-amino-acid polypeptide reads, in one-letter code: Probable N-acetylmuramoyl-L-alanine amidase (354 aa).

Residues 1–39 (MVKVINNFVKVNQYDRPGLKLAAVKGIVMHWTATPGASA) form the signal peptide. In terms of domain architecture, N-acetylmuramoyl-L-alanine amidase spans 40 to 152 (LNERNYFNGT…YDVTNKGCPT (113 aa)).

Belongs to the N-acetylmuramoyl-L-alanine amidase 2 family.

The protein localises to the secreted. The enzyme catalyses Hydrolyzes the link between N-acetylmuramoyl residues and L-amino acid residues in certain cell-wall glycopeptides.. This is Probable N-acetylmuramoyl-L-alanine amidase from Bacillus licheniformis.